The following is a 353-amino-acid chain: Photosystem II protein D1 (353 aa).

The residue at position 2 (Thr-2) is an N-acetylthreonine. Residue Thr-2 is modified to Phosphothreonine. The next 3 helical transmembrane spans lie at 29-46, 118-133, and 142-156; these read YIGW…TATS, HFLL…EWEL, and WIAV…AATA. A chlorophyll a-binding site is contributed by His-118. Residue Tyr-126 participates in pheophytin a binding. Residues Asp-170 and Glu-189 each contribute to the [CaMn4O5] cluster site. Residues 197 to 218 traverse the membrane as a helical segment; it reads FHMLGVAGVFGSSLFSAMHGSL. Residue His-198 coordinates chlorophyll a. A quinone contacts are provided by residues His-215 and 264–265; that span reads SF. His-215 lines the Fe cation pocket. His-272 serves as a coordination point for Fe cation. A helical membrane pass occupies residues 274–288; sequence FLAAWPVVGIWFTAL. [CaMn4O5] cluster is bound by residues His-332, Glu-333, Asp-342, and Ala-344. Positions 345–353 are excised as a propeptide; sequence AMEAPSVNG.

The protein belongs to the reaction center PufL/M/PsbA/D family. In terms of assembly, PSII is composed of 1 copy each of membrane proteins PsbA, PsbB, PsbC, PsbD, PsbE, PsbF, PsbH, PsbI, PsbJ, PsbK, PsbL, PsbM, PsbT, PsbX, PsbY, PsbZ, Psb30/Ycf12, at least 3 peripheral proteins of the oxygen-evolving complex and a large number of cofactors. It forms dimeric complexes. It depends on The D1/D2 heterodimer binds P680, chlorophylls that are the primary electron donor of PSII, and subsequent electron acceptors. It shares a non-heme iron and each subunit binds pheophytin, quinone, additional chlorophylls, carotenoids and lipids. D1 provides most of the ligands for the Mn4-Ca-O5 cluster of the oxygen-evolving complex (OEC). There is also a Cl(-1) ion associated with D1 and D2, which is required for oxygen evolution. The PSII complex binds additional chlorophylls, carotenoids and specific lipids. as a cofactor. Post-translationally, tyr-161 forms a radical intermediate that is referred to as redox-active TyrZ, YZ or Y-Z. In terms of processing, C-terminally processed by CTPA; processing is essential to allow assembly of the oxygen-evolving complex and thus photosynthetic growth.

It localises to the plastid. It is found in the chloroplast thylakoid membrane. It carries out the reaction 2 a plastoquinone + 4 hnu + 2 H2O = 2 a plastoquinol + O2. Photosystem II (PSII) is a light-driven water:plastoquinone oxidoreductase that uses light energy to abstract electrons from H(2)O, generating O(2) and a proton gradient subsequently used for ATP formation. It consists of a core antenna complex that captures photons, and an electron transfer chain that converts photonic excitation into a charge separation. The D1/D2 (PsbA/PsbD) reaction center heterodimer binds P680, the primary electron donor of PSII as well as several subsequent electron acceptors. The sequence is that of Photosystem II protein D1 from Vigna unguiculata (Cowpea).